A 179-amino-acid polypeptide reads, in one-letter code: Large ribosomal subunit protein uL5 (179 aa).

The protein belongs to the universal ribosomal protein uL5 family. In terms of assembly, part of the 50S ribosomal subunit; part of the 5S rRNA/L5/L18/L25 subcomplex. Contacts the 5S rRNA and the P site tRNA. Forms a bridge to the 30S subunit in the 70S ribosome.

This is one of the proteins that bind and probably mediate the attachment of the 5S RNA into the large ribosomal subunit, where it forms part of the central protuberance. In the 70S ribosome it contacts protein S13 of the 30S subunit (bridge B1b), connecting the 2 subunits; this bridge is implicated in subunit movement. Contacts the P site tRNA; the 5S rRNA and some of its associated proteins might help stabilize positioning of ribosome-bound tRNAs. The sequence is that of Large ribosomal subunit protein uL5 from Stutzerimonas stutzeri (strain A1501) (Pseudomonas stutzeri).